We begin with the raw amino-acid sequence, 177 residues long: Superoxide dismutase [Cu-Zn] 1 (177 aa).

An N-terminal signal peptide occupies residues M1 to A20. Residues H69, H71, and H94 each coordinate Cu cation. A disulfide bond links C76 and C172. Zn(2+) is bound by residues H94, H103, H112, and D115. Residue H150 coordinates Cu cation.

Belongs to the Cu-Zn superoxide dismutase family. As to quaternary structure, monomer. Requires Cu cation as cofactor. It depends on Zn(2+) as a cofactor.

It localises to the periplasm. The catalysed reaction is 2 superoxide + 2 H(+) = H2O2 + O2. In terms of biological role, destroys radicals which are normally produced within the cells and which are toxic to biological systems. The protein is Superoxide dismutase [Cu-Zn] 1 (sodC1) of Salmonella typhimurium (strain 4/74).